A 362-amino-acid chain; its full sequence is Glucuronokinase 1 (362 aa).

126–136 (PRQTGLSGSSA) is a binding site for ATP. Residue Asp-179 is the Proton acceptor of the active site.

This sequence belongs to the GHMP kinase family. Requires Mg(2+) as cofactor. Mn(2+) is required as a cofactor. The cofactor is Co(2+). Highly expressed in pollen. Detected in seedlings, inflorescences, seeds, leaves and roots.

The catalysed reaction is D-glucuronate + ATP = 1-phospho-alpha-D-glucuronate + ADP + H(+). Functionally, sugar-1-kinase with a strict substrate specificity for D-glucuronic acid and ATP. Involved in the biosynthesis of UDP-glucuronic acid (UDP-GlcA), providing nucleotide sugars for cell-wall polymers. May be also involved in a salvage pathway for glucuronic acid. The sequence is that of Glucuronokinase 1 (GLCAK1) from Arabidopsis thaliana (Mouse-ear cress).